The chain runs to 210 residues: Helix-loop-helix protein 26 (210 aa).

Over residues 1-15 (MSSSPTSSSSGSPSS) the composition is skewed to low complexity. The tract at residues 1–33 (MSSSPTSSSSGSPSSHGHRSETEKQRRDDTNDL) is disordered. Positions 14 to 65 (SSHGHRSETEKQRRDDTNDLLNEFKKIVQKSESEKLSKEEVLFRIVKLLSGI) constitute a bHLH domain. The segment covering 18 to 33 (HRSETEKQRRDDTNDL) has biased composition (basic and acidic residues).

In terms of assembly, homodimer; binds to DNA as a homodimer. Expressed in intestinal cells (at protein level).

The protein localises to the nucleus. As a homodimer binds DNA via the E-box sequence 5'-CACGTG-3'. Represses lag-2 transcription during embryogenesis via Notch signaling, in an unc-37-dependent manner. Also represses tbx-37 independent of Notch signaling. In the intestine, plays a role in probiotic-mediated protection against infections by pathogens such as S.enterica. This is most likely by positively regulating the expression of genes such as bar-1 upon exposure to probiotic bacteria such as the E.faecium. This Caenorhabditis elegans protein is Helix-loop-helix protein 26.